A 142-amino-acid chain; its full sequence is Small ribosomal subunit protein uS12 (142 aa).

The interval 1 to 22 (MPTFNQLVRKGRKAAKKKSTAP) is disordered. A compositionally biased stretch (basic residues) spans 9–19 (RKGRKAAKKKS). Position 102 is a 3-methylthioaspartic acid (D102).

Belongs to the universal ribosomal protein uS12 family. Part of the 30S ribosomal subunit. Contacts proteins S8 and S17. May interact with IF1 in the 30S initiation complex.

In terms of biological role, with S4 and S5 plays an important role in translational accuracy. Interacts with and stabilizes bases of the 16S rRNA that are involved in tRNA selection in the A site and with the mRNA backbone. Located at the interface of the 30S and 50S subunits, it traverses the body of the 30S subunit contacting proteins on the other side and probably holding the rRNA structure together. The combined cluster of proteins S8, S12 and S17 appears to hold together the shoulder and platform of the 30S subunit. This chain is Small ribosomal subunit protein uS12, found in Acetivibrio thermocellus (strain ATCC 27405 / DSM 1237 / JCM 9322 / NBRC 103400 / NCIMB 10682 / NRRL B-4536 / VPI 7372) (Clostridium thermocellum).